The following is a 178-amino-acid chain: uncharacterized protein (178 aa).

The signal sequence occupies residues 1–23; that stretch reads MTMFKKISVLFFTLILAGCSSWS.

This is an uncharacterized protein from Haemophilus influenzae (strain ATCC 51907 / DSM 11121 / KW20 / Rd).